The following is a 1972-amino-acid chain: Myosin-11 (1972 aa).

A phosphoserine mark is found at S8, S23, and S40. A Myosin N-terminal SH3-like domain is found at 31-81 (VAKKLVWVPSEKQGFEAASIKEEKGDEVVVELVENGKKVTVGKDDIQKMNP). The Myosin motor domain occupies 85–783 (SKVEDMAELT…VLAHLEEERD (699 aa)). K129 bears the N6,N6,N6-trimethyllysine mark. 178–185 (GESGAGKT) is a binding site for ATP. Actin-binding stretches follow at residues 661–683 (LGKL…IPNH) and 762–776 (RIGQ…GVLA). Residues 786–815 (ITDVIMAFQAMCRGYLARKAFTKRQQQLTA) enclose the IQ domain. Residues 844-1934 (LLQVTRQEEE…KSKLRRGNEA (1091 aa)) adopt a coiled-coil conformation. A Phosphothreonine modification is found at T1177. A phosphoserine mark is found at S1684 and S1722. A compositionally biased stretch (polar residues) spans 1771–1788 (NELATERSTAQKNESARQ). 2 disordered regions span residues 1771–1797 (NELA…NKEL) and 1867–1972 (QYKE…KASE). A compositionally biased stretch (basic and acidic residues) spans 1867–1876 (QYKEQAEKGN). Residues 1935-1972 (SFVPSRRAGGRRVIENTDGSEEEMDARDSDFNGTKASE) form a C-terminal region. The residue at position 1951 (T1951) is a Phosphothreonine. 2 positions are modified to phosphoserine: S1954 and S1971.

Belongs to the TRAFAC class myosin-kinesin ATPase superfamily. Myosin family. Muscle myosin is a hexameric protein that consists of 2 heavy chain subunits (MHC), 2 alkali light chain subunits (MLC) and 2 regulatory light chain subunits (MLC-2).

The protein localises to the melanosome. It is found in the cytoplasm. The protein resides in the myofibril. Muscle contraction. The chain is Myosin-11 (Myh11) from Mus musculus (Mouse).